The chain runs to 302 residues: 1,2-dihydroxynaphthalene dioxygenase (302 aa).

VOC domains lie at 9-124 (ELGY…IFWG) and 149-270 (GLGH…PGWR). His152 lines the Fe cation pocket. Substrate-binding positions include His152, 199-200 (DH), His215, and Tyr256. His215 is a Fe cation binding site. A Fe cation-binding site is contributed by Glu266.

The protein belongs to the extradiol ring-cleavage dioxygenase family. Fe(2+) is required as a cofactor.

The catalysed reaction is naphthalene-1,2-diol + O2 = 2-hydroxychromene-2-carboxylate + H(+). Its pathway is aromatic compound metabolism; naphthalene degradation. With respect to regulation, inhibited by bathophenanthroline sulfonate, o-phenanthroline, 8-hydroxyquinoline, 2,2'-dipyridyl and p-chlormercuribenzoate. Also inhibited by Hg(2+), Cu(2+), Co(2+) and Fe(3+) ions. Functionally, involved in the naphthalene catabolic pathway. Catalyzes the meta-cleavage of 1,2-dihydroxynaphthalene (1,2-DHN) to yield 2-hydroxychromene-2-carboxylic acid. Can also cleave 3-methylcatechol and 4-methylcatechol. This is 1,2-dihydroxynaphthalene dioxygenase (nahC) from Pseudomonas putida (Arthrobacter siderocapsulatus).